A 378-amino-acid chain; its full sequence is Chorismate synthase (378 aa).

Arg49 is a binding site for NADP(+). FMN is bound by residues 126–128 (RAS), Gly287, 302–306 (KPTAT), and Arg328.

It belongs to the chorismate synthase family. Homotetramer. The cofactor is FMNH2.

The enzyme catalyses 5-O-(1-carboxyvinyl)-3-phosphoshikimate = chorismate + phosphate. The protein operates within metabolic intermediate biosynthesis; chorismate biosynthesis; chorismate from D-erythrose 4-phosphate and phosphoenolpyruvate: step 7/7. Catalyzes the anti-1,4-elimination of the C-3 phosphate and the C-6 proR hydrogen from 5-enolpyruvylshikimate-3-phosphate (EPSP) to yield chorismate, which is the branch point compound that serves as the starting substrate for the three terminal pathways of aromatic amino acid biosynthesis. This reaction introduces a second double bond into the aromatic ring system. The chain is Chorismate synthase from Synechococcus sp. (strain JA-3-3Ab) (Cyanobacteria bacterium Yellowstone A-Prime).